Reading from the N-terminus, the 307-residue chain is Transcription factor MYB78 (307 aa).

HTH myb-type domains are found at residues 23–79 (EMDV…RPDV) and 80–130 (RRGN…QKHA). DNA-binding regions (H-T-H motif) lie at residues 51–75 (WNSLARCAELKRTGKSCRLRWLNYL) and 103–126 (WSKIAQYLPGRTDNEIKNYWRTRV).

It localises to the nucleus. This is Transcription factor MYB78 from Arabidopsis thaliana (Mouse-ear cress).